The primary structure comprises 422 residues: UDP-N-acetylglucosamine 1-carboxyvinyltransferase (422 aa).

Residue 22 to 23 (KN) coordinates phosphoenolpyruvate. Arg-94 is a UDP-N-acetyl-alpha-D-glucosamine binding site. The Proton donor role is filled by Cys-118. The residue at position 118 (Cys-118) is a 2-(S-cysteinyl)pyruvic acid O-phosphothioketal. Residues 123–127 (RPVDL), Asp-309, and Ile-331 each bind UDP-N-acetyl-alpha-D-glucosamine.

The protein belongs to the EPSP synthase family. MurA subfamily.

It localises to the cytoplasm. The enzyme catalyses phosphoenolpyruvate + UDP-N-acetyl-alpha-D-glucosamine = UDP-N-acetyl-3-O-(1-carboxyvinyl)-alpha-D-glucosamine + phosphate. Its pathway is cell wall biogenesis; peptidoglycan biosynthesis. Functionally, cell wall formation. Adds enolpyruvyl to UDP-N-acetylglucosamine. The chain is UDP-N-acetylglucosamine 1-carboxyvinyltransferase from Cereibacter sphaeroides (strain ATCC 17023 / DSM 158 / JCM 6121 / CCUG 31486 / LMG 2827 / NBRC 12203 / NCIMB 8253 / ATH 2.4.1.) (Rhodobacter sphaeroides).